The chain runs to 384 residues: MGKRDYYEILGVTRQASEEEIKKAYRKLALKYHPDRNPGDKDSEELFKEAAEAYEVLHDAQKKRIYDTYGHEGLRGTGFSGFRGFEDIFSSFGDVFQEFFNFGFGAGGQSRTAARPGDDLLYDLSLTFEEAVFGTEKEIRLQTLTTCEECNGSGAEPGTRETVCPVCQGSGQVVQSQGFFRISATCTRCQGMGKVLVSPCKTCNGQGRTRQSKTVQVRVPAGVDTGTRLRLRGEGESGYRGGVAGDLYVRLHVNPHEFFERDGDNLYCKVSVSFAQAILGDQIEIPTLDGGRELKIQPGTQPGAVIRFSGEGVPRLRGYGRGDLFIEVEVKIPTRITPRQEEIVTEFMQIEKEKSGEKVRKWPWSKRKDREKKSMAESTREART.

One can recognise a J domain in the interval 5–70 (DYYEILGVTR…QKKRIYDTYG (66 aa)). The CR-type zinc finger occupies 134-212 (GTEKEIRLQT…CNGQGRTRQS (79 aa)). Residues C147, C150, C164, C167, C186, C189, C200, and C203 each coordinate Zn(2+). CXXCXGXG motif repeat units lie at residues 147 to 154 (CEECNGSG), 164 to 171 (CPVCQGSG), 186 to 193 (CTRCQGMG), and 200 to 207 (CKTCNGQG). The disordered stretch occupies residues 352-384 (KEKSGEKVRKWPWSKRKDREKKSMAESTREART).

This sequence belongs to the DnaJ family. In terms of assembly, homodimer. Zn(2+) serves as cofactor.

The protein resides in the cytoplasm. Participates actively in the response to hyperosmotic and heat shock by preventing the aggregation of stress-denatured proteins and by disaggregating proteins, also in an autonomous, DnaK-independent fashion. Unfolded proteins bind initially to DnaJ; upon interaction with the DnaJ-bound protein, DnaK hydrolyzes its bound ATP, resulting in the formation of a stable complex. GrpE releases ADP from DnaK; ATP binding to DnaK triggers the release of the substrate protein, thus completing the reaction cycle. Several rounds of ATP-dependent interactions between DnaJ, DnaK and GrpE are required for fully efficient folding. Also involved, together with DnaK and GrpE, in the DNA replication of plasmids through activation of initiation proteins. The sequence is that of Chaperone protein DnaJ from Syntrophobacter fumaroxidans (strain DSM 10017 / MPOB).